A 361-amino-acid polypeptide reads, in one-letter code: Monodechloroaminopyrrolnitrin synthase PrnB (361 aa).

222–225 contributes to the substrate binding site; the sequence is PGAV. Residue H313 coordinates heme. The substrate site is built by Y321 and S332.

The protein belongs to the PrnB family. Monomer. Heme b serves as cofactor.

The catalysed reaction is 7-chloro-L-tryptophan + AH2 + O2 = monodechloroaminopyrrolnitrin + A + CO2 + 2 H2O. It participates in antibiotic biosynthesis. Functionally, involved in the biosynthesis of the antifungal antibiotic pyrrolnitrin. Catalyzes the ring rearrangement and decarboxylation to convert 7-chloro-L-tryptophan (7-CLT) to monodechloroaminopyrrolnitrin (MDA). It can also use 7-chloro-D-tryptophan, but 7-chloro-L-tryptophan is the preferred natural enantiomer. The sequence is that of Monodechloroaminopyrrolnitrin synthase PrnB (prnB) from Pseudomonas fluorescens.